We begin with the raw amino-acid sequence, 141 residues long: Proteasome maturation protein (141 aa).

Lysine 39 is covalently cross-linked (Glycyl lysine isopeptide (Lys-Gly) (interchain with G-Cter in SUMO2)). The short motif at 68 to 72 (RNIQG) is the High-affinity association with the preproteasome element.

Belongs to the POMP/UMP1 family. In terms of assembly, constituent of preproteasomes, but not of mature 20S proteasomes. Within the preproteasome, may directly interact with PSMB1/beta6, PSMB4/beta7, PSMB5/beta5, PSMB6/beta1 and PSMB9/beta1i. Interaction with PSMB8/beta5i has been observed in PubMed:10973495, but not in PubMed:10926487. Forms tetramers. In terms of tissue distribution, strongly expressed from the basal layer to the granular layer of healthy epidermis, whereas in KLICK patients there is a gradual decrease of expression toward the granular layer.

Its subcellular location is the cytoplasm. It localises to the cytosol. It is found in the nucleus. The protein localises to the microsome membrane. Molecular chaperone essential for the assembly of standard proteasomes and immunoproteasomes. Degraded after completion of proteasome maturation. Mediates the association of 20S preproteasome with the endoplasmic reticulum. The chain is Proteasome maturation protein from Homo sapiens (Human).